Reading from the N-terminus, the 355-residue chain is F-box only protein 32 (355 aa).

The Nuclear localization signal signature appears at 62–67 (KKRKKD). The Nuclear export signal motif lies at 169–173 (LLQTL). The F-box domain occupies 223-271 (LTFTDLPLCLQLNIMQRLSDGRDLVSLGQAAPDLHVLSEDRLLWKKLCQ). The Bipartite nuclear localization signal signature appears at 280–295 (RKRLILSDKGQLDWKK).

As to quaternary structure, part of the SCF (SKP1-CUL1-F-box) E3 ubiquitin-protein ligase complex SCF(FBXO32) formed of CUL1, SKP1, RBX1 and FBXO32. In terms of tissue distribution, specifically expressed in cardiac and skeletal muscle.

It is found in the cytoplasm. The protein localises to the nucleus. The protein operates within protein modification; protein ubiquitination. Substrate recognition component of a SCF (SKP1-CUL1-F-box protein) E3 ubiquitin-protein ligase complex which mediates the ubiquitination and subsequent proteasomal degradation of target proteins. Probably recognizes and binds to phosphorylated target proteins during skeletal muscle atrophy. Recognizes TERF1. The chain is F-box only protein 32 (FBXO32) from Homo sapiens (Human).